A 257-amino-acid chain; its full sequence is Thioredoxin-dependent peroxide reductase, mitochondrial (257 aa).

Residues 1 to 62 constitute a mitochondrion transit peptide; the sequence is MAAAAGRLLW…SAFSTSSSFH (62 aa). Residues 64–222 form the Thioredoxin domain; that stretch reads PAVTQHAPYF…TLRLVKAFQF (159 aa). N6-succinyllysine is present on lysine 84. Position 92 is an N6-acetyllysine; alternate (lysine 92). An N6-succinyllysine; alternate modification is found at lysine 92. The active-site Cysteine sulfenic acid (-SOH) intermediate is cysteine 109. Threonine 147 carries the phosphothreonine modification.

Belongs to the peroxiredoxin family. AhpC/Prx1 subfamily. Homodimer; disulfide-linked, upon oxidation. 6 homodimers assemble to form a ring-like dodecamer. Interacts with NEK6. Interacts with LRRK2. Interacts with MAP3K13. Interacts with RPS6KC1 (via PX domain). Post-translationally, phosphorylated by LRRK2; phosphorylation reduces perodixase activity. In terms of processing, the enzyme can be inactivated by further oxidation of the cysteine sulfenic acid (C(P)-SOH) to sulphinic acid (C(P)-SO2H) and sulphonic acid (C(P)-SO3H) instead of its condensation to a disulfide bond. S-palmitoylated. Housekeeping-type gene preferentially expressed in murine erythroleukemia (MEL) cells.

It localises to the mitochondrion. It is found in the cytoplasm. The protein resides in the early endosome. It catalyses the reaction a hydroperoxide + [thioredoxin]-dithiol = an alcohol + [thioredoxin]-disulfide + H2O. Functionally, thiol-specific peroxidase that catalyzes the reduction of hydrogen peroxide and organic hydroperoxides to water and alcohols, respectively. Plays a role in cell protection against oxidative stress by detoxifying peroxides. Acts synergistically with MAP3K13 to regulate the activation of NF-kappa-B in the cytosol. Required for the maintenance of physical strength. The polypeptide is Thioredoxin-dependent peroxide reductase, mitochondrial (Prdx3) (Mus musculus (Mouse)).